The chain runs to 277 residues: Putative endonuclease (277 aa).

In terms of biological role, putative endonuclease. The protein is Putative endonuclease of Escherichia coli (Enterobacteria phage T5).